Reading from the N-terminus, the 160-residue chain is D-aminoacyl-tRNA deacylase (160 aa).

The short motif at 146–147 is the Gly-cisPro motif, important for rejection of L-amino acids element; that stretch reads GP.

Belongs to the DTD family. In terms of assembly, homodimer.

It is found in the cytoplasm. It carries out the reaction glycyl-tRNA(Ala) + H2O = tRNA(Ala) + glycine + H(+). The enzyme catalyses a D-aminoacyl-tRNA + H2O = a tRNA + a D-alpha-amino acid + H(+). Functionally, an aminoacyl-tRNA editing enzyme that deacylates mischarged D-aminoacyl-tRNAs. Also deacylates mischarged glycyl-tRNA(Ala), protecting cells against glycine mischarging by AlaRS. Acts via tRNA-based rather than protein-based catalysis; rejects L-amino acids rather than detecting D-amino acids in the active site. By recycling D-aminoacyl-tRNA to D-amino acids and free tRNA molecules, this enzyme counteracts the toxicity associated with the formation of D-aminoacyl-tRNA entities in vivo and helps enforce protein L-homochirality. The chain is D-aminoacyl-tRNA deacylase from Desulfovibrio desulfuricans (strain ATCC 27774 / DSM 6949 / MB).